Consider the following 238-residue polypeptide: N-(5'-phosphoribosyl)anthranilate isomerase (238 aa).

This sequence belongs to the TrpF family.

It catalyses the reaction N-(5-phospho-beta-D-ribosyl)anthranilate = 1-(2-carboxyphenylamino)-1-deoxy-D-ribulose 5-phosphate. It functions in the pathway amino-acid biosynthesis; L-tryptophan biosynthesis; L-tryptophan from chorismate: step 3/5. This Methanosarcina acetivorans (strain ATCC 35395 / DSM 2834 / JCM 12185 / C2A) protein is N-(5'-phosphoribosyl)anthranilate isomerase.